The sequence spans 305 residues: UDP-3-O-acyl-N-acetylglucosamine deacetylase (305 aa).

The Zn(2+) site is built by histidine 79, histidine 238, and aspartate 242. Histidine 265 functions as the Proton donor in the catalytic mechanism.

This sequence belongs to the LpxC family. Zn(2+) serves as cofactor.

The enzyme catalyses a UDP-3-O-[(3R)-3-hydroxyacyl]-N-acetyl-alpha-D-glucosamine + H2O = a UDP-3-O-[(3R)-3-hydroxyacyl]-alpha-D-glucosamine + acetate. The protein operates within glycolipid biosynthesis; lipid IV(A) biosynthesis; lipid IV(A) from (3R)-3-hydroxytetradecanoyl-[acyl-carrier-protein] and UDP-N-acetyl-alpha-D-glucosamine: step 2/6. In terms of biological role, catalyzes the hydrolysis of UDP-3-O-myristoyl-N-acetylglucosamine to form UDP-3-O-myristoylglucosamine and acetate, the committed step in lipid A biosynthesis. This Escherichia fergusonii (strain ATCC 35469 / DSM 13698 / CCUG 18766 / IAM 14443 / JCM 21226 / LMG 7866 / NBRC 102419 / NCTC 12128 / CDC 0568-73) protein is UDP-3-O-acyl-N-acetylglucosamine deacetylase.